A 261-amino-acid chain; its full sequence is uncharacterized protein (261 aa).

An N-terminal signal peptide occupies residues 1–22; sequence MRDSKRVVLYISIMVLSIFIIG. Cysteine 23 carries N-palmitoyl cysteine lipidation. Cysteine 23 carries the S-diacylglycerol cysteine lipid modification.

This sequence belongs to the staphylococcal tandem lipoprotein family.

It localises to the cell membrane. This is an uncharacterized protein from Staphylococcus aureus (strain N315).